The following is an 878-amino-acid chain: AP-5 complex subunit beta-1 (878 aa).

Residues 234-260 are disordered; that stretch reads RLQPQAPSWPAAEEGEGERSLTAREHS. The span at 250 to 260 shows a compositional bias: basic and acidic residues; the sequence is GERSLTAREHS.

As to quaternary structure, probably part of the adaptor protein complex 5 (AP-5), a tetramer composed of AP5B1, AP5M1, AP5S1 and AP5Z1. Interacts with ZFYVE26 and SPG11.

Its function is as follows. As part of AP-5, a probable fifth adaptor protein complex it may be involved in endosomal transport. The polypeptide is AP-5 complex subunit beta-1 (AP5B1) (Homo sapiens (Human)).